A 60-amino-acid chain; its full sequence is Large ribosomal subunit protein bL32 (60 aa).

This sequence belongs to the bacterial ribosomal protein bL32 family.

The chain is Large ribosomal subunit protein bL32 from Borrelia turicatae (strain 91E135).